The chain runs to 227 residues: 2,3-bisphosphoglycerate-dependent phosphoglycerate mutase (227 aa).

Residues 7-14 (RHGFSEWN), 20-21 (TG), Arg59, 86-89 (ERHY), Lys97, 113-114 (RR), and 182-183 (GN) each bind substrate. His8 serves as the catalytic Tele-phosphohistidine intermediate. Glu86 acts as the Proton donor/acceptor in catalysis.

The protein belongs to the phosphoglycerate mutase family. BPG-dependent PGAM subfamily. In terms of assembly, homodimer.

It catalyses the reaction (2R)-2-phosphoglycerate = (2R)-3-phosphoglycerate. Its pathway is carbohydrate degradation; glycolysis; pyruvate from D-glyceraldehyde 3-phosphate: step 3/5. Catalyzes the interconversion of 2-phosphoglycerate and 3-phosphoglycerate. The polypeptide is 2,3-bisphosphoglycerate-dependent phosphoglycerate mutase (Glaesserella parasuis serovar 5 (strain SH0165) (Haemophilus parasuis)).